The chain runs to 322 residues: Acetyl-coenzyme A carboxylase carboxyl transferase subunit alpha (322 aa).

The CoA carboxyltransferase C-terminal domain occupies D32–Q293.

The protein belongs to the AccA family. In terms of assembly, acetyl-CoA carboxylase is a heterohexamer composed of biotin carboxyl carrier protein (AccB), biotin carboxylase (AccC) and two subunits each of ACCase subunit alpha (AccA) and ACCase subunit beta (AccD).

The protein resides in the cytoplasm. It carries out the reaction N(6)-carboxybiotinyl-L-lysyl-[protein] + acetyl-CoA = N(6)-biotinyl-L-lysyl-[protein] + malonyl-CoA. The protein operates within lipid metabolism; malonyl-CoA biosynthesis; malonyl-CoA from acetyl-CoA: step 1/1. Functionally, component of the acetyl coenzyme A carboxylase (ACC) complex. First, biotin carboxylase catalyzes the carboxylation of biotin on its carrier protein (BCCP) and then the CO(2) group is transferred by the carboxyltransferase to acetyl-CoA to form malonyl-CoA. The protein is Acetyl-coenzyme A carboxylase carboxyl transferase subunit alpha of Aromatoleum aromaticum (strain DSM 19018 / LMG 30748 / EbN1) (Azoarcus sp. (strain EbN1)).